The primary structure comprises 138 residues: Ribosomal RNA large subunit methyltransferase H (138 aa).

S-adenosyl-L-methionine contacts are provided by residues L57, G86, and 105-110; that span reads LSPLTF.

Belongs to the RNA methyltransferase RlmH family. Homodimer.

Its subcellular location is the cytoplasm. The catalysed reaction is pseudouridine(1915) in 23S rRNA + S-adenosyl-L-methionine = N(3)-methylpseudouridine(1915) in 23S rRNA + S-adenosyl-L-homocysteine + H(+). Specifically methylates the pseudouridine at position 1915 (m3Psi1915) in 23S rRNA. This Prochlorococcus marinus (strain MIT 9301) protein is Ribosomal RNA large subunit methyltransferase H.